The primary structure comprises 318 residues: NADH-ubiquinone oxidoreductase chain 1 (318 aa).

A run of 8 helical transmembrane segments spans residues 3 to 23 (FMNL…LTLL), 69 to 89 (VLFI…WIPL), 102 to 122 (ILFM…SGWA), 146 to 166 (LAII…STLI), 171 to 191 (HIWL…STLA), 222 to 242 (LFFL…IILF), 253 to 273 (ELYT…FLWV), and 294 to 314 (LPLT…LAGI).

The protein belongs to the complex I subunit 1 family. As to quaternary structure, core subunit of respiratory chain NADH dehydrogenase (Complex I) which is composed of 45 different subunits.

The protein resides in the mitochondrion inner membrane. It catalyses the reaction a ubiquinone + NADH + 5 H(+)(in) = a ubiquinol + NAD(+) + 4 H(+)(out). In terms of biological role, core subunit of the mitochondrial membrane respiratory chain NADH dehydrogenase (Complex I) which catalyzes electron transfer from NADH through the respiratory chain, using ubiquinone as an electron acceptor. Essential for the catalytic activity and assembly of complex I. This Cnephaeus nilssonii (Northern bat) protein is NADH-ubiquinone oxidoreductase chain 1 (MT-ND1).